We begin with the raw amino-acid sequence, 230 residues long: MSFKNLVPVITIDGPSGVGKSSVCKVISKKLQWNVLESGWIYRVLAFIIFKNNVCFSSRNLNILFKNINLHDFIQRINFKNYVISQSLFTNISQEYIGNLASRLACIPYIRHFLLFQQRSFRKFPGLIANGRDMGTVVFPDAIIKFFLISDFKTRVARRCLEYEKKGINSCNYKKIFYDMKTRDQRDHNRKISPLIPAKNAILIDSTYMSLKQVSNVLLSYILKMQKFKL.

14–22 (GPSGVGKSS) is a binding site for ATP.

This sequence belongs to the cytidylate kinase family. Type 1 subfamily.

The protein resides in the cytoplasm. The enzyme catalyses CMP + ATP = CDP + ADP. The catalysed reaction is dCMP + ATP = dCDP + ADP. The sequence is that of Cytidylate kinase from Buchnera aphidicola subsp. Baizongia pistaciae (strain Bp).